The sequence spans 353 residues: MEVISTNTNGSTIFKSGAIPMNGHHNGTSKHQNGHKNGTSEQQNGTISLDNGNELLGNSNCIKPGWFSEFSALWPGEAFSLKVEKLLFQGKSDYQDVMLFESATYGKVLTLDGAIQHTENGGFPYTEMIVHLPLGSIPNPKKVLIIGGGIGFTLFEMLRYPTIEKIDIVEIDDVVVDVSRKFFPYLAANFNDPRVTLVLGDGAAFVKAAQAEYYDAIIVDSSDPIGPAKDLFERPFFEAVAKALRPGGVVCTQAESIWLHMHIIKQIIANCRQVFKGSVNYAWTTVPTYPTGVIGYMLCSTEGPEIDFKNPVNPIDKETAQVKSKLAPLKFYNSDIHKAAFILPSFARSMIES.

A disordered region spans residues 15-50 (KSGAIPMNGHHNGTSKHQNGHKNGTSEQQNGTISLD). Over residues 25–50 (HNGTSKHQNGHKNGTSEQQNGTISLD) the composition is skewed to polar residues. The PABS domain occupies 64–301 (PGWFSEFSAL…GVIGYMLCST (238 aa)). S-adenosyl-L-methionine contacts are provided by residues glutamine 95, glutamate 170, and 201 to 202 (DG). Catalysis depends on aspartate 220, which acts as the Proton acceptor. Tyrosine 289 provides a ligand contact to S-adenosyl-L-methionine.

This sequence belongs to the class I-like SAM-binding methyltransferase superfamily. Putrescine methyltransferase family. As to expression, predominantly expressed in roots.

The catalysed reaction is putrescine + S-adenosyl-L-methionine = N-methylputrescine + S-adenosyl-L-homocysteine + H(+). Its pathway is alkaloid biosynthesis; nicotine biosynthesis. Involved in the biosynthesis of pyridine alkaloid natural products, leading mainly to the production of anabasine, anatabine, nicotine and nornicotine, effective deterrents against herbivores with antiparasitic and pesticide properties (neurotoxins); nornicotine serves as the precursor in the synthesis of the carcinogen compound N'-nitrosonornicotine (NNN). Methyltransferase that mediates the conversion of putrescine to N-methylputrescine. Promotes leaves ripening. The sequence is that of Putrescine N-methyltransferase 2 from Nicotiana tabacum (Common tobacco).